A 207-amino-acid polypeptide reads, in one-letter code: uncharacterized protein (207 aa).

The YrdC-like domain maps to 14 to 201 (ARLINQAVEI…SPVILREGSG (188 aa)).

It belongs to the SUA5 family.

This is an uncharacterized protein from Haemophilus influenzae (strain ATCC 51907 / DSM 11121 / KW20 / Rd).